The following is a 206-amino-acid chain: Large ribosomal subunit protein uL13y (206 aa).

It belongs to the universal ribosomal protein uL13 family.

The chain is Large ribosomal subunit protein uL13y (RPL13AB) from Arabidopsis thaliana (Mouse-ear cress).